Reading from the N-terminus, the 448-residue chain is Glutamyl-tRNA reductase (448 aa).

Residues 49–52, Ser109, 114–116, and Gln120 each bind substrate; these read TCNR and ETQ. The active-site Nucleophile is the Cys50. An NADP(+)-binding site is contributed by 189-194; the sequence is GAGEMS.

It belongs to the glutamyl-tRNA reductase family. In terms of assembly, homodimer.

It catalyses the reaction (S)-4-amino-5-oxopentanoate + tRNA(Glu) + NADP(+) = L-glutamyl-tRNA(Glu) + NADPH + H(+). Its pathway is porphyrin-containing compound metabolism; protoporphyrin-IX biosynthesis; 5-aminolevulinate from L-glutamyl-tRNA(Glu): step 1/2. Catalyzes the NADPH-dependent reduction of glutamyl-tRNA(Glu) to glutamate 1-semialdehyde (GSA). The sequence is that of Glutamyl-tRNA reductase from Staphylococcus haemolyticus (strain JCSC1435).